Reading from the N-terminus, the 146-residue chain is uncharacterized protein (146 aa).

The region spanning 7–146 is the N-acetyltransferase domain; that stretch reads LQINYKTDEL…EGHDILIWNP (140 aa).

This is an uncharacterized protein from Staphylococcus epidermidis (strain ATCC 12228 / FDA PCI 1200).